The primary structure comprises 439 residues: Tol-Pal system protein TolB (439 aa).

A signal peptide spans 1–22; the sequence is MTKFPRWLAILVGLLFPLSALT.

The protein belongs to the TolB family. The Tol-Pal system is composed of five core proteins: the inner membrane proteins TolA, TolQ and TolR, the periplasmic protein TolB and the outer membrane protein Pal. They form a network linking the inner and outer membranes and the peptidoglycan layer.

The protein localises to the periplasm. Its function is as follows. Part of the Tol-Pal system, which plays a role in outer membrane invagination during cell division and is important for maintaining outer membrane integrity. The protein is Tol-Pal system protein TolB of Xylella fastidiosa (strain M12).